Here is a 120-residue protein sequence, read N- to C-terminus: C-type natriuretic peptide 4 (120 aa).

The N-terminal stretch at 1-22 (MNLSYLVACGLMITLLSVRMGA) is a signal peptide. A propeptide spanning residues 23-96 (KPLSQAQQKS…PRRHKTGIKK (74 aa)) is cleaved from the precursor. Cysteines 104 and 120 form a disulfide.

It belongs to the natriuretic peptide family.

It is found in the secreted. Its function is as follows. Exhibits natriuretic and vasodepressant activity. Has cGMP-stimulating activity. May help to regulate body fluid homeostasis in a variety of aquatic environments. In Takifugu rubripes (Japanese pufferfish), this protein is C-type natriuretic peptide 4.